Here is a 315-residue protein sequence, read N- to C-terminus: Aspartate carbamoyltransferase catalytic subunit (315 aa).

Arg64 and Thr65 together coordinate carbamoyl phosphate. Residue Lys92 participates in L-aspartate binding. Carbamoyl phosphate-binding residues include Arg114, His142, and Gln145. L-aspartate-binding residues include Arg175 and Arg229. Carbamoyl phosphate contacts are provided by Gly270 and Pro271.

It belongs to the aspartate/ornithine carbamoyltransferase superfamily. ATCase family. In terms of assembly, heterododecamer (2C3:3R2) of six catalytic PyrB chains organized as two trimers (C3), and six regulatory PyrI chains organized as three dimers (R2).

The enzyme catalyses carbamoyl phosphate + L-aspartate = N-carbamoyl-L-aspartate + phosphate + H(+). It participates in pyrimidine metabolism; UMP biosynthesis via de novo pathway; (S)-dihydroorotate from bicarbonate: step 2/3. Functionally, catalyzes the condensation of carbamoyl phosphate and aspartate to form carbamoyl aspartate and inorganic phosphate, the committed step in the de novo pyrimidine nucleotide biosynthesis pathway. The polypeptide is Aspartate carbamoyltransferase catalytic subunit (Bradyrhizobium diazoefficiens (strain JCM 10833 / BCRC 13528 / IAM 13628 / NBRC 14792 / USDA 110)).